The chain runs to 255 residues: PHD finger protein ALFIN-LIKE 4 (255 aa).

Residue M1 is modified to N-acetylmethionine. The interval 145 to 200 is disordered; that stretch reads GKDKSSVSNNSSNRSKSSSKRGSESRAKFSKPEPKDDEEEEEEGVEEEDEDEQGET. Over residues 150–160 the composition is skewed to low complexity; it reads SVSNNSSNRSK. The segment covering 165–178 has biased composition (basic and acidic residues); it reads RGSESRAKFSKPEP. Over residues 179-198 the composition is skewed to acidic residues; sequence KDDEEEEEEGVEEEDEDEQG. The segment at 199 to 251 adopts a PHD-type zinc-finger fold; sequence ETQCGACGESYAADEFWICCDLCEMWFHGKCVKITPARAEHIKQYKCPSCSNK.

Belongs to the Alfin family. Interacts with H3K4me3 and to a lesser extent with H3K4me2. Ubiquitously expressed.

Its subcellular location is the nucleus. Histone-binding component that specifically recognizes H3 tails trimethylated on 'Lys-4' (H3K4me3), which mark transcription start sites of virtually all active genes. This is PHD finger protein ALFIN-LIKE 4 (AL4) from Arabidopsis thaliana (Mouse-ear cress).